The primary structure comprises 200 residues: MKIILATSNKHKVLELKEILKDFEIYAFDEVLMPFEIEENGKTFKENALIKARAVFNALDEKQKKDFIALSDDSGICVDVLEGNPGIYSARFSDKGDDKSNRDKLVNEMIKKGFNQSRAHYVAAIAMVGLMGEFSTHGTMHGKVIDTEKGENGFGYDSLFIPKGFDKTLAQLSVDEKNNISHRFKALELAKIILKILNKG.

7-12 is a binding site for substrate; it reads TSNKHK. Glutamate 38 and aspartate 73 together coordinate Mg(2+). Aspartate 73 functions as the Proton acceptor in the catalytic mechanism. Residues serine 74, 154–157, lysine 177, and 182–183 contribute to the substrate site; these read FGYD and HR.

It belongs to the HAM1 NTPase family. In terms of assembly, homodimer. Mg(2+) is required as a cofactor.

The enzyme catalyses XTP + H2O = XMP + diphosphate + H(+). It catalyses the reaction dITP + H2O = dIMP + diphosphate + H(+). The catalysed reaction is ITP + H2O = IMP + diphosphate + H(+). Functionally, pyrophosphatase that catalyzes the hydrolysis of nucleoside triphosphates to their monophosphate derivatives, with a high preference for the non-canonical purine nucleotides XTP (xanthosine triphosphate), dITP (deoxyinosine triphosphate) and ITP. Seems to function as a house-cleaning enzyme that removes non-canonical purine nucleotides from the nucleotide pool, thus preventing their incorporation into DNA/RNA and avoiding chromosomal lesions. The protein is dITP/XTP pyrophosphatase of Campylobacter jejuni subsp. jejuni serotype O:6 (strain 81116 / NCTC 11828).